Reading from the N-terminus, the 329-residue chain is Fructose-1,6-bisphosphatase class 1 (329 aa).

Positions 84, 103, 105, and 106 each coordinate Mg(2+). Substrate is bound by residues 106–109 (DGSS), Asn196, and Lys262. Glu268 is a Mg(2+) binding site.

This sequence belongs to the FBPase class 1 family. Homotetramer. The cofactor is Mg(2+).

It is found in the cytoplasm. It carries out the reaction beta-D-fructose 1,6-bisphosphate + H2O = beta-D-fructose 6-phosphate + phosphate. The protein operates within carbohydrate biosynthesis; gluconeogenesis. This chain is Fructose-1,6-bisphosphatase class 1, found in Shewanella loihica (strain ATCC BAA-1088 / PV-4).